The sequence spans 181 residues: Large ribosomal subunit protein uL5c (181 aa).

This sequence belongs to the universal ribosomal protein uL5 family. As to quaternary structure, part of the 50S ribosomal subunit; contacts the 5S rRNA.

The protein localises to the plastid. It localises to the chloroplast. Binds 5S rRNA, forms part of the central protuberance of the 50S subunit. This is Large ribosomal subunit protein uL5c (rpl5) from Heterosigma akashiwo (strain NIES-293 / 8280G21-1).